We begin with the raw amino-acid sequence, 298 residues long: MPDVRRAAAPRARSADPIAEEAAELLGSGAVPAMNAAVSPSVAAGREMMDRAMRIVPARSELRVTNEAGFVLHAHPYRETSLVLDVFTRDHGRVAMVAKGAKRPHSALRAVLQHFHPIALSWTGRGEVKTLTKAEYVGGMLPLSGDALLSGFYLNELLLRFCPREDAHPTLFRHYMATLTRLSHGEPASFVLRSFERVLLQETGFAVAFDQCLRSGERVQPGLDYVYQPERGVRRTHASDPSSWPVVSGQTLLDMAQDDYSRAQTVSQSRALMRFLLHYYLQGAPLKTRQILIDLQYL.

Belongs to the RecO family.

Involved in DNA repair and RecF pathway recombination. The polypeptide is DNA repair protein RecO (Cupriavidus metallidurans (strain ATCC 43123 / DSM 2839 / NBRC 102507 / CH34) (Ralstonia metallidurans)).